A 1343-amino-acid chain; its full sequence is DNA-directed RNA polymerase subunit beta (1343 aa).

This sequence belongs to the RNA polymerase beta chain family. As to quaternary structure, the RNAP catalytic core consists of 2 alpha, 1 beta, 1 beta' and 1 omega subunit. When a sigma factor is associated with the core the holoenzyme is formed, which can initiate transcription.

The catalysed reaction is RNA(n) + a ribonucleoside 5'-triphosphate = RNA(n+1) + diphosphate. DNA-dependent RNA polymerase catalyzes the transcription of DNA into RNA using the four ribonucleoside triphosphates as substrates. The chain is DNA-directed RNA polymerase subunit beta from Shewanella sp. (strain W3-18-1).